The following is a 156-amino-acid chain: Probable inactive ribonuclease-like protein 13 (156 aa).

The N-terminal stretch at 1–20 (MAPAVTRLLFLQLVLGPTLV) is a signal peptide. N-linked (GlcNAc...) asparagine glycosylation is present at asparagine 126.

It belongs to the pancreatic ribonuclease family.

The protein localises to the secreted. Its function is as follows. Does not exhibit any ribonuclease activity. This Homo sapiens (Human) protein is Probable inactive ribonuclease-like protein 13 (RNASE13).